A 170-amino-acid polypeptide reads, in one-letter code: Ribosome maturation factor RimM (170 aa).

The PRC barrel domain occupies 93 to 165; the sequence is PDEFHDHELI…RVVIDPPPGL (73 aa).

This sequence belongs to the RimM family. In terms of assembly, binds ribosomal protein uS19.

Its subcellular location is the cytoplasm. Its function is as follows. An accessory protein needed during the final step in the assembly of 30S ribosomal subunit, possibly for assembly of the head region. Essential for efficient processing of 16S rRNA. May be needed both before and after RbfA during the maturation of 16S rRNA. It has affinity for free ribosomal 30S subunits but not for 70S ribosomes. The protein is Ribosome maturation factor RimM of Thermobifida fusca (strain YX).